We begin with the raw amino-acid sequence, 98 residues long: NADH-ubiquinone oxidoreductase chain 4L (98 aa).

The next 3 membrane-spanning stretches (helical) occupy residues 1 to 21 (MTSISLNLIMAFSLALAGVLI), 28 to 48 (STLLCLEGMMLSLFILMALLI), and 59 to 79 (APLILLVFSACEAGVGLALLV).

The protein belongs to the complex I subunit 4L family. In terms of assembly, core subunit of respiratory chain NADH dehydrogenase (Complex I) which is composed of 45 different subunits.

The protein localises to the mitochondrion inner membrane. It catalyses the reaction a ubiquinone + NADH + 5 H(+)(in) = a ubiquinol + NAD(+) + 4 H(+)(out). Core subunit of the mitochondrial membrane respiratory chain NADH dehydrogenase (Complex I) which catalyzes electron transfer from NADH through the respiratory chain, using ubiquinone as an electron acceptor. Part of the enzyme membrane arm which is embedded in the lipid bilayer and involved in proton translocation. This Vombatus ursinus (Common wombat) protein is NADH-ubiquinone oxidoreductase chain 4L (MT-ND4L).